The sequence spans 851 residues: Internalin J (851 aa).

The signal sequence occupies residues 1 to 25; sequence MKTTKIVIASLVSLTMVSNPLLTFA. LRR repeat units lie at residues 94–115, 116–136, 137–157, 158–179, 180–200, 201–221, 222–243, 244–263, 264–284, 285–306, 316–325, 338–357, 359–368, and 380–402; these read TLTSLDCHNSSITDMTGIEKLT, GLTKLICTSNNITTLDLSQNT, NLTYLACDSNKLTNLDVTPLT, KLTYLNCDTNKLTKLDVSQNPL, LTYLNCARNTLTEIDVSHNTQ, LTELDCHLNKKITKLDVTPQT, QLTTLDCSFNKITELDVSQNKL, LNRLNCDTNNITKLDLNQNI, QLTFLDCSSNKLTEIDVTPLT, QLTYFDCSVNPLTELDVSTLSK, DLLEIDLTHN, KIKELDVTHNTQLYLLDCQA, GITELDLSQN, and ELTELDVSHNTKLKSLSCVNAHI. 4 MucBP domains span residues 506–568, 576–638, 647–709, and 717–779; these read PIKG…SQSV, IVAA…AQTV, APEK…SQTV, and IEAA…AQTV. Residues 786–825 form a disordered region; that stretch reads NTNTDQPLPTKKPTNTTPTKPSNLKTTEVKKASDTLPKTG. Residues 792–811 show a composition bias toward low complexity; sequence PLPTKKPTNTTPTKPSNLKT. Residues 821–825 carry the LPXTG sorting signal motif; sequence LPKTG. T824 carries the post-translational modification Pentaglycyl murein peptidoglycan amidated threonine. Positions 825–851 are cleaved as a propeptide — removed by sortase A; that stretch reads GDSAPWKSALLGVFLSSTALVIWKKKK.

This sequence belongs to the internalin family. As to quaternary structure, nearly full-length mature protein and an internal LRR-containing fragment interact in vitro with human intestinal mucin-2 (MUC2) but not with mucin-1. LRR fragment binding is slightly better at pH 5.5, (the pH of the intestine) than at pH 7.4.

It localises to the secreted. The protein localises to the cell wall. With respect to regulation, despite being transcribed during bacterial growth in culture the protein is only detected in infected mice. In terms of biological role, involved in several steps of L.monocytogenes infection by both intravenous and oral infection. Probably acts as an adhesion; upon ectopic expression in L.innocula bacteria adhere better to human cell lines. This Listeria monocytogenes serovar 1/2a (strain ATCC BAA-679 / EGD-e) protein is Internalin J (inlJ).